The primary structure comprises 178 residues: CCHC-type zinc finger nucleic acid binding protein (178 aa).

An N-acetylserine modification is found at Ser2. The CCHC-type 1 zinc finger occupies 4 to 21; it reads NECFKCGRSGHWARECPT. Lys8 is subject to N6-acetyllysine. 2 positions are modified to omega-N-methylarginine; by PRMT1: Arg25 and Arg27. The RNA-binding Arg/Gly-rich region (RGG-box) stretch occupies residues 25–38; the sequence is RGRGMRSRGRGGFT. Omega-N-methylarginine occurs at positions 32 and 34. Position 49 is a phosphoserine (Ser49). CCHC-type zinc fingers lie at residues 52 to 69, 72 to 90, 97 to 114, 118 to 135, 136 to 153, and 157 to 174; these read DICY…DCDL, DEAC…DCKE, QCCY…DCDH, QKCY…DCTK, VKCY…NCSK, and VNCY…ECTI. Omega-N-methylarginine occurs at positions 72, 79, and 80.

Associates with the 40S ribosomal subunit, the 80S ribosome and with polysomes. Arginine methylation by PRMT1 in the Arg/Gly-rich region impedes RNA binding.

Its subcellular location is the nucleus. The protein localises to the cytoplasm. It is found in the endoplasmic reticulum. Its function is as follows. Single-stranded DNA-binding protein that preferentially binds to the sterol regulatory element (SRE) sequence 5'-GTGCGGTG-3', and thereby mediates transcriptional repression. Has a role as transactivator of the Myc promoter. Binds single-stranded RNA in a sequence-specific manner. Binds G-rich elements in target mRNA coding sequences. Prevents G-quadruplex structure formation in vitro, suggesting a role in supporting translation by resolving stable structures on mRNAs. This chain is CCHC-type zinc finger nucleic acid binding protein, found in Mus musculus (Mouse).